Here is a 297-residue protein sequence, read N- to C-terminus: 3-methyl-2-oxobutanoate hydroxymethyltransferase (297 aa).

The span at 1–15 (MSEQISEQSEQNVYG) shows a compositional bias: polar residues. Residues 1 to 40 (MSEQISEQSEQNVYGASSPVPAGESSPSAASAPRTKVRTH) are disordered. Residues 16 to 33 (ASSPVPAGESSPSAASAP) show a composition bias toward low complexity. Mg(2+)-binding residues include aspartate 78 and aspartate 117. 3-methyl-2-oxobutanoate-binding positions include 78-79 (DS), aspartate 117, and lysine 147. Mg(2+) is bound at residue glutamate 149. Catalysis depends on glutamate 215, which acts as the Proton acceptor.

It belongs to the PanB family. As to quaternary structure, homodecamer; pentamer of dimers. Requires Mg(2+) as cofactor.

The protein localises to the cytoplasm. The enzyme catalyses 3-methyl-2-oxobutanoate + (6R)-5,10-methylene-5,6,7,8-tetrahydrofolate + H2O = 2-dehydropantoate + (6S)-5,6,7,8-tetrahydrofolate. The protein operates within cofactor biosynthesis; (R)-pantothenate biosynthesis; (R)-pantoate from 3-methyl-2-oxobutanoate: step 1/2. Functionally, catalyzes the reversible reaction in which hydroxymethyl group from 5,10-methylenetetrahydrofolate is transferred onto alpha-ketoisovalerate to form ketopantoate. This is 3-methyl-2-oxobutanoate hydroxymethyltransferase from Mycobacterium marinum (strain ATCC BAA-535 / M).